We begin with the raw amino-acid sequence, 397 residues long: Formate-dependent phosphoribosylglycinamide formyltransferase (397 aa).

N(1)-(5-phospho-beta-D-ribosyl)glycinamide is bound by residues 21-22 and Glu-81; that span reads EL. ATP contacts are provided by residues Arg-113, Lys-154, 194–197, and Glu-202; that span reads EEYV. Residues 118 to 313 form the ATP-grasp domain; the sequence is KLAAEKVKVP…EFQIHVRSAL (196 aa). Mg(2+) is bound by residues Glu-272 and Glu-284. N(1)-(5-phospho-beta-D-ribosyl)glycinamide is bound by residues Asp-291, Lys-361, and 368-369; that span reads RR.

Belongs to the PurK/PurT family. In terms of assembly, homodimer.

The catalysed reaction is N(1)-(5-phospho-beta-D-ribosyl)glycinamide + formate + ATP = N(2)-formyl-N(1)-(5-phospho-beta-D-ribosyl)glycinamide + ADP + phosphate + H(+). Its pathway is purine metabolism; IMP biosynthesis via de novo pathway; N(2)-formyl-N(1)-(5-phospho-D-ribosyl)glycinamide from N(1)-(5-phospho-D-ribosyl)glycinamide (formate route): step 1/1. Its function is as follows. Involved in the de novo purine biosynthesis. Catalyzes the transfer of formate to 5-phospho-ribosyl-glycinamide (GAR), producing 5-phospho-ribosyl-N-formylglycinamide (FGAR). Formate is provided by PurU via hydrolysis of 10-formyl-tetrahydrofolate. This chain is Formate-dependent phosphoribosylglycinamide formyltransferase, found in Sulfurisphaera tokodaii (strain DSM 16993 / JCM 10545 / NBRC 100140 / 7) (Sulfolobus tokodaii).